A 274-amino-acid chain; its full sequence is Diaminopimelate epimerase (274 aa).

Residues Asn11, Gln44, and Asn64 each coordinate substrate. Catalysis depends on Cys73, which acts as the Proton donor. Substrate is bound by residues 74-75 (GN), Asn157, Asn190, and 208-209 (ER). The active-site Proton acceptor is Cys217. 218 to 219 (GS) lines the substrate pocket.

It belongs to the diaminopimelate epimerase family. Homodimer.

It localises to the cytoplasm. It carries out the reaction (2S,6S)-2,6-diaminopimelate = meso-2,6-diaminopimelate. The protein operates within amino-acid biosynthesis; L-lysine biosynthesis via DAP pathway; DL-2,6-diaminopimelate from LL-2,6-diaminopimelate: step 1/1. Its function is as follows. Catalyzes the stereoinversion of LL-2,6-diaminopimelate (L,L-DAP) to meso-diaminopimelate (meso-DAP), a precursor of L-lysine and an essential component of the bacterial peptidoglycan. The protein is Diaminopimelate epimerase of Pectobacterium atrosepticum (strain SCRI 1043 / ATCC BAA-672) (Erwinia carotovora subsp. atroseptica).